A 99-amino-acid chain; its full sequence is Large ribosomal subunit protein bL27 (99 aa).

Positions 1 to 9 (MLLMNLQLF) are excised as a propeptide.

Belongs to the bacterial ribosomal protein bL27 family. The N-terminus is cleaved by ribosomal processing cysteine protease Prp.

This chain is Large ribosomal subunit protein bL27, found in Clostridium novyi (strain NT).